Reading from the N-terminus, the 395-residue chain is Outer membrane protein assembly factor BamB (395 aa).

An N-terminal signal peptide occupies residues 1–20 (MKSWCKNLLAAGLSLAMLSA). The N-palmitoyl cysteine moiety is linked to residue Cys-21. Cys-21 carries S-diacylglycerol cysteine lipidation.

The protein belongs to the BamB family. Part of the Bam complex.

It is found in the cell outer membrane. Functionally, part of the outer membrane protein assembly complex, which is involved in assembly and insertion of beta-barrel proteins into the outer membrane. This is Outer membrane protein assembly factor BamB from Shewanella oneidensis (strain ATCC 700550 / JCM 31522 / CIP 106686 / LMG 19005 / NCIMB 14063 / MR-1).